Consider the following 201-residue polypeptide: 3-isopropylmalate dehydratase small subunit (201 aa).

The protein belongs to the LeuD family. LeuD type 1 subfamily. As to quaternary structure, heterodimer of LeuC and LeuD.

The catalysed reaction is (2R,3S)-3-isopropylmalate = (2S)-2-isopropylmalate. The protein operates within amino-acid biosynthesis; L-leucine biosynthesis; L-leucine from 3-methyl-2-oxobutanoate: step 2/4. Catalyzes the isomerization between 2-isopropylmalate and 3-isopropylmalate, via the formation of 2-isopropylmaleate. This is 3-isopropylmalate dehydratase small subunit from Shewanella baltica (strain OS155 / ATCC BAA-1091).